A 1276-amino-acid polypeptide reads, in one-letter code: Probable ubiquitin carboxyl-terminal hydrolase K02C4.3 (1276 aa).

Residues 168 to 762 form the USP domain; the sequence is TGLYNSGNTC…SAYMLMYVRS (595 aa). Cys-177 acts as the Nucleophile in catalysis. Residues 375–402 are disordered; sequence SMDTEAATSSNLPGNSVENHPNPAAPEV. Over residues 380 to 393 the composition is skewed to polar residues; the sequence is AATSSNLPGNSVEN. His-707 (proton acceptor) is an active-site residue.

Belongs to the peptidase C19 family.

It catalyses the reaction Thiol-dependent hydrolysis of ester, thioester, amide, peptide and isopeptide bonds formed by the C-terminal Gly of ubiquitin (a 76-residue protein attached to proteins as an intracellular targeting signal).. The polypeptide is Probable ubiquitin carboxyl-terminal hydrolase K02C4.3 (Caenorhabditis elegans).